The following is a 215-amino-acid chain: Translation initiation factor 6 (215 aa).

It belongs to the eIF-6 family.

In terms of biological role, binds to the 50S ribosomal subunit and prevents its association with the 30S ribosomal subunit to form the 70S initiation complex. In Archaeoglobus fulgidus (strain ATCC 49558 / DSM 4304 / JCM 9628 / NBRC 100126 / VC-16), this protein is Translation initiation factor 6.